The following is a 371-amino-acid chain: NDMA-dependent alcohol dehydrogenase (371 aa).

Positions 40, 61, 91, 94, 97, 105, and 167 each coordinate Zn(2+).

The protein belongs to the zinc-containing alcohol dehydrogenase family. Homotrimer. NADH is required as a cofactor.

The catalysed reaction is N,N-dimethyl-4-nitrosoaniline + a primary alcohol = 4-(hydroxylamino)-N,N-dimethylaniline + an aldehyde. The enzyme catalyses ethanol + A = acetaldehyde + AH2. Inhibited by trans-4-(N,N-dimethylamino)-cinnamaldehyde through direct binding to the catalytic zinc ion in a substrate-like geometry. Isobutyramide acts as a competitive inhibitor with respect to the electron acceptor NDMA. Acetaldehyde, AMP, ADP, ATP, as well as CuSO(4), FeSO(4), HgCl(2), NiCl(2), ZnSO(4), KCN, and NaN(3) are additional inhibitors of the catalytic activity. Functionally, catalytically different from common alcohol dehydrogenases. Effective in oxidizing ethanol, other primary alcohols and benzylalcohol only in the presence of p-nitroso-N,N-dimethylaniline (NDMA) as an electron acceptor. NADH acts as a cofactor here instead as a coenzyme. The polypeptide is NDMA-dependent alcohol dehydrogenase (Amycolatopsis methanolica).